A 503-amino-acid polypeptide reads, in one-letter code: Probable cytosol aminopeptidase (503 aa).

Mn(2+)-binding residues include K270 and D275. Residue K282 is part of the active site. Mn(2+) is bound by residues D293, D352, and E354. R356 is a catalytic residue.

The protein belongs to the peptidase M17 family. Mn(2+) is required as a cofactor.

It is found in the cytoplasm. The catalysed reaction is Release of an N-terminal amino acid, Xaa-|-Yaa-, in which Xaa is preferably Leu, but may be other amino acids including Pro although not Arg or Lys, and Yaa may be Pro. Amino acid amides and methyl esters are also readily hydrolyzed, but rates on arylamides are exceedingly low.. The enzyme catalyses Release of an N-terminal amino acid, preferentially leucine, but not glutamic or aspartic acids.. Functionally, presumably involved in the processing and regular turnover of intracellular proteins. Catalyzes the removal of unsubstituted N-terminal amino acids from various peptides. The protein is Probable cytosol aminopeptidase of Pectobacterium atrosepticum (strain SCRI 1043 / ATCC BAA-672) (Erwinia carotovora subsp. atroseptica).